The following is a 291-amino-acid chain: ATP synthase gamma chain (291 aa).

Belongs to the ATPase gamma chain family. As to quaternary structure, F-type ATPases have 2 components, CF(1) - the catalytic core - and CF(0) - the membrane proton channel. CF(1) has five subunits: alpha(3), beta(3), gamma(1), delta(1), epsilon(1). CF(0) has three main subunits: a, b and c.

The protein resides in the cell membrane. Its function is as follows. Produces ATP from ADP in the presence of a proton gradient across the membrane. The gamma chain is believed to be important in regulating ATPase activity and the flow of protons through the CF(0) complex. This Streptococcus uberis (strain ATCC BAA-854 / 0140J) protein is ATP synthase gamma chain.